The chain runs to 337 residues: Glutaminase-asparaginase (337 aa).

One can recognise an Asparaginase/glutaminase domain in the interval 10-337 (ANVVILATGG…KELQRIFWEY (328 aa)). The active-site Acyl-ester intermediate is threonine 20. Substrate contacts are provided by residues serine 67 and 100–101 (TD).

This sequence belongs to the asparaginase 1 family. Homotetramer.

Its subcellular location is the periplasm. It catalyses the reaction L-glutamine + H2O = L-glutamate + NH4(+). It carries out the reaction L-asparagine + H2O = L-aspartate + NH4(+). This is Glutaminase-asparaginase (ansB) from Pseudomonas sp. (strain ATCC 29598 / 7A).